Consider the following 317-residue polypeptide: Methionyl-tRNA formyltransferase (317 aa).

112–115 serves as a coordination point for (6S)-5,6,7,8-tetrahydrofolate; the sequence is SLLP.

This sequence belongs to the Fmt family.

It catalyses the reaction L-methionyl-tRNA(fMet) + (6R)-10-formyltetrahydrofolate = N-formyl-L-methionyl-tRNA(fMet) + (6S)-5,6,7,8-tetrahydrofolate + H(+). Attaches a formyl group to the free amino group of methionyl-tRNA(fMet). The formyl group appears to play a dual role in the initiator identity of N-formylmethionyl-tRNA by promoting its recognition by IF2 and preventing the misappropriation of this tRNA by the elongation apparatus. The chain is Methionyl-tRNA formyltransferase from Histophilus somni (strain 129Pt) (Haemophilus somnus).